Here is a 142-residue protein sequence, read N- to C-terminus: uncharacterized protein (142 aa).

The segment at Met-1–Asn-22 is disordered. Transmembrane regions (helical) follow at residues Leu-63–Val-83 and Ile-109–Leu-129.

It localises to the membrane. This is an uncharacterized protein from Acanthamoeba polyphaga mimivirus (APMV).